We begin with the raw amino-acid sequence, 307 residues long: tRNA pseudouridine synthase B (307 aa).

The active-site Nucleophile is aspartate 38.

It belongs to the pseudouridine synthase TruB family. Type 1 subfamily.

The enzyme catalyses uridine(55) in tRNA = pseudouridine(55) in tRNA. Responsible for synthesis of pseudouridine from uracil-55 in the psi GC loop of transfer RNAs. This Bacillus thuringiensis (strain Al Hakam) protein is tRNA pseudouridine synthase B.